We begin with the raw amino-acid sequence, 338 residues long: Lipoate-protein ligase A (338 aa).

The BPL/LPL catalytic domain occupies 29-216; sequence PATQRVLFLW…AFFAHYGERV (188 aa). ATP contacts are provided by residues R71, 76-79, and K134; that span reads GAVF. Position 134 (K134) interacts with (R)-lipoate.

It belongs to the LplA family. As to quaternary structure, monomer.

The protein resides in the cytoplasm. The enzyme catalyses L-lysyl-[lipoyl-carrier protein] + (R)-lipoate + ATP = N(6)-[(R)-lipoyl]-L-lysyl-[lipoyl-carrier protein] + AMP + diphosphate + H(+). It participates in protein modification; protein lipoylation via exogenous pathway; protein N(6)-(lipoyl)lysine from lipoate: step 1/2. The protein operates within protein modification; protein lipoylation via exogenous pathway; protein N(6)-(lipoyl)lysine from lipoate: step 2/2. Its function is as follows. Catalyzes both the ATP-dependent activation of exogenously supplied lipoate to lipoyl-AMP and the transfer of the activated lipoyl onto the lipoyl domains of lipoate-dependent enzymes. In Salmonella schwarzengrund (strain CVM19633), this protein is Lipoate-protein ligase A.